A 97-amino-acid chain; its full sequence is HssA/B-like protein 32 (97 aa).

2 disordered regions span residues 1 to 23 (MTLF…SLAS) and 62 to 97 (AKSS…GSCS). Residues 62–74 (AKSSGGSCGGKGG) are compositionally biased toward gly residues. Basic residues predominate over residues 75 to 88 (SHNHGHGHGPHGHG).

Belongs to the hssA/B family.

In Dictyostelium discoideum (Social amoeba), this protein is HssA/B-like protein 32 (hssl32).